The following is a 509-amino-acid chain: L-aspartate semialdehyde sulfurtransferase (509 aa).

Cysteine 133 acts as the Cysteine persulfide intermediate in catalysis. CBS domains are found at residues 394-450 and 455-509; these read LSKP…NKKT and MTRN…GGKK. S-methyl-5'-thioadenosine-binding residues include serine 395, isoleucine 399, and histidine 421. S-adenosyl-L-methionine is bound by residues aspartate 439, threonine 456, isoleucine 460, and 479 to 482; that span reads NISG. 497–500 is an S-methyl-5'-thioadenosine binding site; it reads TSED.

It belongs to the L-aspartate semialdehyde sulfurtransferase family. As to quaternary structure, homodimer. May form a complex with MJ0099.

It catalyses the reaction L-aspartate 4-semialdehyde + reduced 2[4Fe-4S]-[ferredoxin] + hydrogen sulfide + 3 H(+) = oxidized 2[4Fe-4S]-[ferredoxin] + L-homocysteine + H2O. It participates in amino-acid biosynthesis. With respect to regulation, the ligand-induced conformational reorganization of the protein could be an important regulatory mechanism. Functionally, required for O-acetylhomoserine sulfhydrylase (OAHS)-independent homocysteine (Hcy) biosynthesis. Together with MJ0099, catalyzes the condensation of sulfide with aspartate semialdehyde to generate homocysteine. Likely functions through persulfide intermediate. The protein is L-aspartate semialdehyde sulfurtransferase of Methanocaldococcus jannaschii (strain ATCC 43067 / DSM 2661 / JAL-1 / JCM 10045 / NBRC 100440) (Methanococcus jannaschii).